The sequence spans 59 residues: Cecropin-A (59 aa).

A signal peptide spans methionine 1–alanine 23. A propeptide spans glycine 58–lysine 59 (removed in mature form (AeaeCec2)).

As to expression, hemolymph (at protein level).

Its subcellular location is the secreted. In terms of biological role, antimicrobial peptide. Antibacterial activity against Gram-negative bacteria E.coli D22 and D31, E.carotovora, K.pneumoniae, P.aeruginosa, S.typhimurium, E.cloacae B12 and X.campestris and Gram-positive bacteria A.viridans, M.luteus, B.megaterium and S.pyogenes. Possesses antifungal activity against F.oxysporum, F.culmorum and N.crassa, C.albicans, C.neoformans and S.cerevisiae. No activity against Gram-negative S.marcescens Db11, Gram-positive B.cereus, B.subtilis, B.thuringiensis, S.aureus and L.monocytogenes, the fungi A.fumigatus and B.bassiana and C.glabrata. Partially neutralizes lipopolysaccharides (LPS). Exhibits anti-inflammatory properties: inhibits LPS-induced iNOS/NOS2 transcription, nitric oxide (NO) and pro-inflammatory cytokine production in mouse macrophages and human peripheral blood mononuclear cells (PBMCs); inhibits LPS-induced activation of MAPK and NF-kappa-B signaling pathways in mouse macrophages. The sequence is that of Cecropin-A (CECA) from Aedes aegypti (Yellowfever mosquito).